Consider the following 198-residue polypeptide: Probable GTP-binding protein EngB (198 aa).

The 175-residue stretch at asparagine 22–leucine 196 folds into the EngB-type G domain. GTP is bound by residues glycine 30–serine 37, glycine 57–threonine 61, aspartate 75–glycine 78, threonine 142–aspartate 145, and phenylalanine 175–alanine 177. Positions 37 and 59 each coordinate Mg(2+).

The protein belongs to the TRAFAC class TrmE-Era-EngA-EngB-Septin-like GTPase superfamily. EngB GTPase family. The cofactor is Mg(2+).

Its function is as follows. Necessary for normal cell division and for the maintenance of normal septation. The protein is Probable GTP-binding protein EngB of Oenococcus oeni (strain ATCC BAA-331 / PSU-1).